Here is a 154-residue protein sequence, read N- to C-terminus: Histone H2B.v3 (154 aa).

Over residues 1–11 (MVFVKGQKKAT) the composition is skewed to basic residues. A disordered region spans residues 1 to 48 (MVFVKGQKKATKGSTQSGEEKTASTTPKVTKTPTEGGEKKRKKRKSDY). Positions 12–27 (KGSTQSGEEKTASTTP) are enriched in polar residues.

The protein belongs to the histone H2B family. As to quaternary structure, the nucleosome is a histone octamer containing two molecules each of H2A, H2B, H3 and H4 assembled in one H3-H4 heterotetramer and two H2A-H2B heterodimers. The octamer wraps approximately 147 bp of DNA.

It is found in the nucleus. The protein localises to the chromosome. Core component of nucleosome which plays a central role in DNA double strand break (DSB) repair. Nucleosomes wrap and compact DNA into chromatin, limiting DNA accessibility to the cellular machineries which require DNA as a template. Histones thereby play a central role in transcription regulation, DNA repair, DNA replication and chromosomal stability. DNA accessibility is regulated via a complex set of post-translational modifications of histones, also called histone code, and nucleosome remodeling. The chain is Histone H2B.v3 (H2Bv3) from Dictyostelium discoideum (Social amoeba).